The sequence spans 273 residues: Large ribosomal subunit protein uL2cz/uL2cy (273 aa).

2 disordered regions span residues methionine 1 to valine 22 and proline 225 to lysine 273.

This sequence belongs to the universal ribosomal protein uL2 family. As to quaternary structure, part of the 50S ribosomal subunit.

It localises to the plastid. The protein localises to the chloroplast. The polypeptide is Large ribosomal subunit protein uL2cz/uL2cy (rpl2-A) (Zea mays (Maize)).